Here is a 313-residue protein sequence, read N- to C-terminus: Protein-glutamine deamidase Cif (313 aa).

Active-site residues include Cys-128, His-186, and Gln-205.

It belongs to the Cif family.

Its subcellular location is the secreted. It localises to the host nucleus. The catalysed reaction is L-glutaminyl-[protein] + H2O = L-glutamyl-[protein] + NH4(+). Its function is as follows. Protein-glutamine deamidase effector that inhibits the host cell cycle and other key cellular processes such as the actin network and programmed-cell death. Acts by mediating the side chain deamidation of 'Gln-40' of host NEDD8, converting it to glutamate, thereby abolishing the activity of cullin-RING-based E3 ubiquitin-protein ligase complexes (CRL complexes). Inactivation of CRL complexes prevents ubiquitination and subsequent degradation of the cyclin-dependent kinase inhibitors CDKN1A/p21 and CDKN1B/p27, leading to G1 and G2 cell cycle arrests in host cells. Deamidation of 'Gln-40' of host NEDD8 also triggers macrophage-specific programmed cell death. Also able to catalyze deamidation of 'Gln-40' of host ubiquitin in vitro; however, NEDD8 constitutes the preferred substrate in vivo. The sequence is that of Protein-glutamine deamidase Cif from Photorhabdus laumondii subsp. laumondii (strain DSM 15139 / CIP 105565 / TT01) (Photorhabdus luminescens subsp. laumondii).